The sequence spans 87 residues: Small ribosomal subunit protein bS20 (87 aa).

Over residues 1–19 the composition is skewed to basic residues; the sequence is MANHKSALKRHRQSIKRNL. Residues 1–22 are disordered; that stretch reads MANHKSALKRHRQSIKRNLRNN.

Belongs to the bacterial ribosomal protein bS20 family.

Functionally, binds directly to 16S ribosomal RNA. The protein is Small ribosomal subunit protein bS20 of Maridesulfovibrio salexigens (strain ATCC 14822 / DSM 2638 / NCIMB 8403 / VKM B-1763) (Desulfovibrio salexigens).